A 370-amino-acid polypeptide reads, in one-letter code: Histidinol-phosphate aminotransferase 3 (370 aa).

An N6-(pyridoxal phosphate)lysine modification is found at Lys229.

The protein belongs to the class-II pyridoxal-phosphate-dependent aminotransferase family. Histidinol-phosphate aminotransferase subfamily. As to quaternary structure, homodimer. Requires pyridoxal 5'-phosphate as cofactor.

It catalyses the reaction L-histidinol phosphate + 2-oxoglutarate = 3-(imidazol-4-yl)-2-oxopropyl phosphate + L-glutamate. Its pathway is amino-acid biosynthesis; L-histidine biosynthesis; L-histidine from 5-phospho-alpha-D-ribose 1-diphosphate: step 7/9. This chain is Histidinol-phosphate aminotransferase 3 (hisC3), found in Rhizobium meliloti (strain 1021) (Ensifer meliloti).